We begin with the raw amino-acid sequence, 166 residues long: Small ribosomal subunit protein uS5 (166 aa).

One can recognise an S5 DRBM domain in the interval 11–74 (LVEKLVAVDR…EAARRNMITV (64 aa)).

The protein belongs to the universal ribosomal protein uS5 family. In terms of assembly, part of the 30S ribosomal subunit. Contacts proteins S4 and S8.

Functionally, with S4 and S12 plays an important role in translational accuracy. Located at the back of the 30S subunit body where it stabilizes the conformation of the head with respect to the body. The polypeptide is Small ribosomal subunit protein uS5 (Acinetobacter baumannii (strain ATCC 17978 / DSM 105126 / CIP 53.77 / LMG 1025 / NCDC KC755 / 5377)).